We begin with the raw amino-acid sequence, 224 residues long: Heme response regulator HssR (224 aa).

Residues T3–L116 enclose the Response regulatory domain. The residue at position 52 (D52) is a 4-aspartylphosphate. Residues N124 to D222 constitute a DNA-binding region (ompR/PhoB-type).

In terms of processing, phosphorylated by HssS.

The protein resides in the cytoplasm. Its function is as follows. Member of the two-component regulatory system HssS/HssR involved in intracellular heme homeostasis and tempering of staphylococcal virulence. Phosphorylated HssR binds to a direct repeat sequence within hrtAB promoter and activates the expression of hrtAB, an efflux pump, in response to extracellular heme, hemin, hemoglobin or blood. The sequence is that of Heme response regulator HssR (hssR) from Staphylococcus saprophyticus subsp. saprophyticus (strain ATCC 15305 / DSM 20229 / NCIMB 8711 / NCTC 7292 / S-41).